We begin with the raw amino-acid sequence, 588 residues long: Protein gamma response 1 (588 aa).

Coiled coils occupy residues 64 to 104 and 164 to 281; these read AACD…LGKT and SEVK…KTVV. Basic and acidic residues-rich tracts occupy residues 377-389, 465-484, and 508-525; these read KHSE…DKVR, NVKR…KKDD, and TSKK…KAER. Disordered regions lie at residues 377-398 and 417-525; these read KHSE…SGNN and PIVR…KAER.

As to expression, basal levels in mitotically dividing cells (meristems), and high levels in endoreduplicating cells (stipules, trichomes) (at protein level).

It is found in the nucleus. In terms of biological role, seems to mediate cell cycle arrest before mitosis in response to DNA damage. Is probably also involved in the transition from mitosis to endoreduplication. The chain is Protein gamma response 1 (GR1) from Arabidopsis thaliana (Mouse-ear cress).